We begin with the raw amino-acid sequence, 94 residues long: Aspartyl/glutamyl-tRNA(Asn/Gln) amidotransferase subunit C (94 aa).

It belongs to the GatC family. In terms of assembly, heterotrimer of A, B and C subunits.

It carries out the reaction L-glutamyl-tRNA(Gln) + L-glutamine + ATP + H2O = L-glutaminyl-tRNA(Gln) + L-glutamate + ADP + phosphate + H(+). The enzyme catalyses L-aspartyl-tRNA(Asn) + L-glutamine + ATP + H2O = L-asparaginyl-tRNA(Asn) + L-glutamate + ADP + phosphate + 2 H(+). In terms of biological role, allows the formation of correctly charged Asn-tRNA(Asn) or Gln-tRNA(Gln) through the transamidation of misacylated Asp-tRNA(Asn) or Glu-tRNA(Gln) in organisms which lack either or both of asparaginyl-tRNA or glutaminyl-tRNA synthetases. The reaction takes place in the presence of glutamine and ATP through an activated phospho-Asp-tRNA(Asn) or phospho-Glu-tRNA(Gln). This is Aspartyl/glutamyl-tRNA(Asn/Gln) amidotransferase subunit C from Caldicellulosiruptor bescii (strain ATCC BAA-1888 / DSM 6725 / KCTC 15123 / Z-1320) (Anaerocellum thermophilum).